Consider the following 122-residue polypeptide: Large ribosomal subunit protein uL18 (122 aa).

Positions 1–19 (MSKLSRKQQTQKRHKRLRR) are enriched in basic residues. The interval 1–27 (MSKLSRKQQTQKRHKRLRRNLSGTESR) is disordered.

The protein belongs to the universal ribosomal protein uL18 family. Part of the 50S ribosomal subunit; part of the 5S rRNA/L5/L18/L25 subcomplex. Contacts the 5S and 23S rRNAs.

In terms of biological role, this is one of the proteins that bind and probably mediate the attachment of the 5S RNA into the large ribosomal subunit, where it forms part of the central protuberance. This Prochlorococcus marinus (strain NATL1A) protein is Large ribosomal subunit protein uL18.